Consider the following 189-residue polypeptide: uncharacterized protein (189 aa).

This is an uncharacterized protein from Human adenovirus B serotype 7 (HAdV-7).